A 274-amino-acid chain; its full sequence is NH(3)-dependent NAD(+) synthetase (274 aa).

Position 46-53 (46-53 (GISGGQDS)) interacts with ATP. Residue aspartate 52 participates in Mg(2+) binding. Arginine 140 is a binding site for deamido-NAD(+). Threonine 160 is a binding site for ATP. Glutamate 165 contacts Mg(2+). 2 residues coordinate deamido-NAD(+): lysine 173 and aspartate 180. ATP-binding residues include lysine 189 and threonine 211. Position 260 to 261 (260 to 261 (HK)) interacts with deamido-NAD(+).

Belongs to the NAD synthetase family. In terms of assembly, homodimer.

It carries out the reaction deamido-NAD(+) + NH4(+) + ATP = AMP + diphosphate + NAD(+) + H(+). Its pathway is cofactor biosynthesis; NAD(+) biosynthesis; NAD(+) from deamido-NAD(+) (ammonia route): step 1/1. In terms of biological role, catalyzes the ATP-dependent amidation of deamido-NAD to form NAD. Uses ammonia as a nitrogen source. The sequence is that of NH(3)-dependent NAD(+) synthetase from Lactococcus lactis subsp. cremoris (strain SK11).